The chain runs to 316 residues: L-lactate dehydrogenase (316 aa).

NAD(+) is bound by residues Val-15, Asp-37, Lys-42, Tyr-68, and 82–83; that span reads GL. Substrate contacts are provided by residues Gln-85, Arg-91, and 123–126; that span reads NPVD. NAD(+) contacts are provided by residues 121-123 and Thr-146; that span reads ASN. Substrate is bound at residue 151–154; that stretch reads DTSR. Beta-D-fructose 1,6-bisphosphate contacts are provided by Arg-156 and His-171. Catalysis depends on His-178, which acts as the Proton acceptor. Phosphotyrosine is present on Tyr-222. Thr-231 lines the substrate pocket.

This sequence belongs to the LDH/MDH superfamily. LDH family. In terms of assembly, homotetramer.

It localises to the cytoplasm. The enzyme catalyses (S)-lactate + NAD(+) = pyruvate + NADH + H(+). It functions in the pathway fermentation; pyruvate fermentation to lactate; (S)-lactate from pyruvate: step 1/1. Allosterically activated by fructose 1,6-bisphosphate (FBP). Catalyzes the conversion of lactate to pyruvate. In Borrelia turicatae (strain 91E135), this protein is L-lactate dehydrogenase.